Consider the following 288-residue polypeptide: uncharacterized protein (288 aa).

The segment covering 126–136 (VAAPASTPVAP) has biased composition (low complexity). Disordered stretches follow at residues 126-227 (VAAP…VTSV) and 258-288 (KEKD…SSEE). The span at 143-152 (RKEFKNEKWK) shows a compositional bias: basic and acidic residues. Over residues 153 to 162 (DKKKQGRRRN) the composition is skewed to basic residues. The segment covering 180–194 (VAEECLQESSSEEGD) has biased composition (acidic residues). Over residues 278–288 (TLVHDRISSEE) the composition is skewed to basic and acidic residues.

This sequence belongs to the chlamydial CPn_0623/CT_504/TC_0791 family.

This is an uncharacterized protein from Chlamydia trachomatis serovar D (strain ATCC VR-885 / DSM 19411 / UW-3/Cx).